The sequence spans 871 residues: MNSLYELDPKWKKLLKTDNFLGGLTVNEFVQELSKDHRNDVLIDANTKNLPTNEKDQDAIREAIWKQLDPKPYIRTFESTLKELKNLNEETLNKRQYFSEQVATQEVIHSENVIKLSKDLHTTLLTFDKLDDRLTNVTQVVSPLGDKLETAIKKKQNYIQSVELIRRYNDFYSMGKSDIVEQLRLSKNWKLNLKSVKLMKNLLILSSKLETSSIPKTINTKLVIEKYSEMMENELLENFNSAYRENNFTKLNEIAIILNNFNGGVNVIQSFINQHDYFIDTKQIDLENEFENVFIKNVKFKEQLIDFENHSVIIETSMQNLINDVETVIKNESKIVKRVFEEKATHVIQLFIQRVFAQKIEPRFEVLLRNSLSISNLAYVRILHGLFTLFGKFTKSLIDYFQLLEIDDSNQILSTTLEQCFADLFSHYLYDRSKYFGIEKRSLEAILVDMTSKFTVNYDKEINKRVLLDKYKEKLSTNVDAFMHSPRGNTHSRQDSTSRSKLSQFNSFLKTHLDKDHLSLNRTNTLSDSFNNSSSSTQYDVANNSSSLVNSSFTASDIDNSPNSPANYSLNDVDSMLKCVVESTARVMELIPNKAHLYILEILKIMFLGIVDSYMEIALEVAYWKICKVDINKTAGVVNLNFLKFISMSTEILDLLSISIKSIFLPLLNNSPEIKAQIIEMTNSQIQKMEILINIILQETITVISTKFSAILCKQKKKDFVPKSQELLDQDTLPAIEIVNILNLIFEQSSKFLKGKNLQTFLTLIGEELYGLLLSHYSHFQVNSIGGVVVTKDIIGYQTAIEDWGVASLIDKFATLRELANLFTVQPELLESLTKEGHLADIGRDIIQSYISNREDFNHDNFINSVKLNFR.

Positions 74–101 form a coiled coil; sequence IRTFESTLKELKNLNEETLNKRQYFSEQ. Residues Ser-142, Ser-485, and Ser-507 each carry the phosphoserine modification.

The protein belongs to the SEC10 family. As to quaternary structure, the exocyst complex is composed of SEC3, SEC5, SEC6, SEC8, SEC10, SEC15, EXO70 and EXO84.

Component of the exocyst complex involved in the docking of exocytic vesicles with fusion sites on the plasma membrane. This Saccharomyces cerevisiae (strain ATCC 204508 / S288c) (Baker's yeast) protein is Exocyst complex component SEC10 (SEC10).